A 506-amino-acid chain; its full sequence is Acyl-CoA-binding domain-containing protein 5 (506 aa).

The region spanning 44–133 is the ACB domain; that stretch reads YETRFEAAVK…MKKIIETMPM (90 aa). Residues 55 to 64, 75 to 79, K101, and Y120 each bind an acyl-CoA; these read IQSLPKNGSF and YSFYK. Residues 175 to 217 are disordered; sequence AKAVNGKAESSDSGAESEEEEAQEELKGAEQSGSDDKKMMTKS. Positions 181–209 form a coiled coil; it reads KAESSDSGAESEEEEAQEELKGAEQSGSD. 6 positions are modified to phosphoserine: S184, S185, S187, S191, S206, and S233. A compositionally biased stretch (basic and acidic residues) spans 198 to 217; the sequence is EELKGAEQSGSDDKKMMTKS. Disordered stretches follow at residues 234–302 and 345–417; these read FAQD…CDSM and AVKG…RGSR. Over residues 238–257 the composition is skewed to basic and acidic residues; that stretch reads SDIHTDSSRSARRSEDKKPT. Polar residues predominate over residues 258–267; it reads DQSSQQTGNT. Phosphoserine is present on S301. Over residues 348-360 the composition is skewed to basic and acidic residues; sequence GKGEVKHGGEDGR. S403 carries the post-translational modification Phosphoserine. A compositionally biased stretch (basic and acidic residues) spans 406–416; it reads DGERWGSDRGS. Positions 426–451 form a coiled coil; sequence LVLIRLQEDMQNVLQRLHKLETLTAS. An N6-acetyllysine modification is found at K444. A helical transmembrane segment spans residues 478 to 498; sequence GALAFAIIWPFIAQWLVHLYY.

It belongs to the ATG37 family.

Its subcellular location is the peroxisome membrane. Functionally, acyl-CoA binding protein which acts as the peroxisome receptor for pexophagy but is dispensable for aggrephagy and nonselective autophagy. Binds medium- and long-chain acyl-CoA esters. The sequence is that of Acyl-CoA-binding domain-containing protein 5 (Acbd5) from Rattus norvegicus (Rat).